The following is a 475-amino-acid chain: Methyltransferase-like protein 25B (475 aa).

Residues 185–210 (NKRLVARAQRLDQELLQALDKMEKRH) are a coiled coil. The chain crosses the membrane as a helical span at residues 406–426 (VVAFFSLALLLAPLVETLILL).

This sequence belongs to the METTL25 family.

It localises to the membrane. The polypeptide is Methyltransferase-like protein 25B (Rattus norvegicus (Rat)).